The following is a 376-amino-acid chain: Serpin B6 (376 aa).

Residue M1 is modified to N-acetylmethionine. A Phosphoserine modification is found at S151. Position 195 is an N6-acetyllysine (K195).

The protein belongs to the serpin family. Ov-serpin subfamily. In terms of assembly, forms a complex with the monomeric form of beta-tryptase.

The protein localises to the cytoplasm. In terms of biological role, inhibitor of cathepsin G, kallikrein-8 and thrombin. May play an important role in the inner ear in the protection against leakage of lysosomal content during stress. May be involved in the regulation of serine proteinases present in the brain or extravasated from the blood. This Pongo abelii (Sumatran orangutan) protein is Serpin B6 (SERPINB6).